Here is a 189-residue protein sequence, read N- to C-terminus: Flavin prenyltransferase UbiX (189 aa).

FMN is bound by residues 10 to 12 (GAS), serine 36, 91 to 94 (STNT), and arginine 126. Tyrosine 156 and lysine 172 together coordinate dimethylallyl phosphate.

This sequence belongs to the UbiX/PAD1 family.

It carries out the reaction dimethylallyl phosphate + FMNH2 = prenylated FMNH2 + phosphate. Flavin prenyltransferase that catalyzes the synthesis of the prenylated FMN cofactor (prenyl-FMN) for 4-hydroxy-3-polyprenylbenzoic acid decarboxylase UbiD. The prenyltransferase is metal-independent and links a dimethylallyl moiety from dimethylallyl monophosphate (DMAP) to the flavin N5 and C6 atoms of FMN. This chain is Flavin prenyltransferase UbiX, found in Aquifex aeolicus (strain VF5).